The primary structure comprises 255 residues: Uracil-DNA glycosylase (255 aa).

The Proton acceptor role is filled by Asp-93.

This sequence belongs to the uracil-DNA glycosylase (UDG) superfamily. UNG family.

The protein localises to the host nucleus. It catalyses the reaction Hydrolyzes single-stranded DNA or mismatched double-stranded DNA and polynucleotides, releasing free uracil.. Functionally, excises uracil residues from the DNA which can arise as a result of misincorporation of dUMP residues by DNA polymerase or deamination of cytosines. Therefore may reduce deleterious uracil incorporation into the viral genome, particularly in terminally differentiated cells which lack DNA repair enzymes. The sequence is that of Uracil-DNA glycosylase (U81) from Human herpesvirus 6A (strain Uganda-1102) (HHV-6 variant A).